The following is a 378-amino-acid chain: MAVNVNTNVSAMTAQRYLNNANSAQQTSMERLSSGFKINSAKDDAAGLQISNRLNVQSRGLDVAVRNANDGISIAQTAEGAMNETTNILQRMRDLSLQSANGSNSKAERVAIQEEVTALNDELNRIAETTSFGGNKLLNGTHGAKSFQIGADNGEAVMLELKDMRSDNKMMGGVSYQAESGKGKDWNVAQGKNDLKISLTDSFGQEQEININAKAGDDIEELATYINGQTDLVKASVDQDGKLQIFAGNNKVEGEVSFSGGLSGELGLGDDKKNVTVDTIDVTSVGGAQESVAIIDAALKYVDSHRAELGAFQNRFNHAISNLDNINENVNASKSRIKDTDFAKETTAMTKSQILSQASSSILAQAKQAPNSALSLLG.

Coiled-coil stretches lie at residues 103–128 and 311–340; these read SNSK…RIAE and AFQN…IKDT.

The protein belongs to the bacterial flagellin family. In terms of assembly, heteromer of multiple flagellin subunits including FlaA, FlaB/D, FlaC, FlaE and FlaF.

Its subcellular location is the secreted. The protein localises to the bacterial flagellum. Its function is as follows. Flagellin is the subunit protein which polymerizes to form the filaments of bacterial flagella. FlaB/D is not essential for polar flagellar synthesis and swimming motility. Homomer of FlaB/D is not able to form a functional filament. This is Polar flagellin B/D (flaB) from Vibrio parahaemolyticus serotype O3:K6 (strain RIMD 2210633).